We begin with the raw amino-acid sequence, 310 residues long: N-acetyl-gamma-glutamyl-phosphate reductase (310 aa).

The active site involves Cys-117.

This sequence belongs to the NAGSA dehydrogenase family. Type 2 subfamily.

Its subcellular location is the cytoplasm. It catalyses the reaction N-acetyl-L-glutamate 5-semialdehyde + phosphate + NADP(+) = N-acetyl-L-glutamyl 5-phosphate + NADPH + H(+). It participates in amino-acid biosynthesis; L-arginine biosynthesis; N(2)-acetyl-L-ornithine from L-glutamate: step 3/4. Catalyzes the NADPH-dependent reduction of N-acetyl-5-glutamyl phosphate to yield N-acetyl-L-glutamate 5-semialdehyde. The protein is N-acetyl-gamma-glutamyl-phosphate reductase of Brucella ovis (strain ATCC 25840 / 63/290 / NCTC 10512).